The sequence spans 146 residues: Deoxyuridine 5'-triphosphate nucleotidohydrolase (146 aa).

Substrate-binding positions include 66–68 (RSG), N79, and 83–85 (TID).

This sequence belongs to the dUTPase family. Mg(2+) is required as a cofactor.

It catalyses the reaction dUTP + H2O = dUMP + diphosphate + H(+). It participates in pyrimidine metabolism; dUMP biosynthesis; dUMP from dCTP (dUTP route): step 2/2. Its function is as follows. This enzyme is involved in nucleotide metabolism: it produces dUMP, the immediate precursor of thymidine nucleotides and it decreases the intracellular concentration of dUTP so that uracil cannot be incorporated into DNA. The protein is Deoxyuridine 5'-triphosphate nucleotidohydrolase of Citrifermentans bemidjiense (strain ATCC BAA-1014 / DSM 16622 / JCM 12645 / Bem) (Geobacter bemidjiensis).